The sequence spans 131 residues: Hypocretin neuropeptide precursor (131 aa).

Residues 1–33 form the signal peptide; that stretch reads MNLPSTKVSWAAVTLLLLLLLLPPALLSSGAAA. Glutamine 34 is subject to Pyrrolidone carboxylic acid. 2 disulfide bridges follow: cysteine 39–cysteine 45 and cysteine 40–cysteine 47. Leucine 66 is modified (leucine amide). Residue methionine 97 is modified to Methionine amide. Residues 98–131 constitute a propeptide, removed in mature form; it reads GRRAGAEPAPRPCLGRRCSAPAAASVAPGGQSGI.

It belongs to the orexin family. In terms of processing, specific enzymatic cleavages at paired basic residues yield the different active peptides. Abundantly expressed in subthalamic nucleus but undetectable in other brain regions tested (hypothalamus was not tested) and in heart, placenta, lung, liver, skeletal muscle, kidney and pancreas.

The protein localises to the rough endoplasmic reticulum. It localises to the cytoplasmic vesicle. It is found in the synapse. In terms of biological role, neuropeptides that play a significant role in the regulation of food intake and sleep-wakefulness, possibly by coordinating the complex behavioral and physiologic responses of these complementary homeostatic functions. A broader role in the homeostatic regulation of energy metabolism, autonomic function, hormonal balance and the regulation of body fluids, is also suggested. Functionally, binds to orexin receptors HCRTR1/OX1R and HCRTR2/OX2R with a high affinity. Stimulates food intake. Modulates pituitary luteinizing hormone secretion in an ovarian steroid-dependent manner. Binds to orexin receptor HCRTR2/OX2R only. Stimulates food intake. Modulates pituitary luteinizing hormone secretion in an ovarian steroid-dependent manner. This chain is Hypocretin neuropeptide precursor, found in Homo sapiens (Human).